Here is a 393-residue protein sequence, read N- to C-terminus: S-adenosylmethionine synthase (393 aa).

Glu9 is a binding site for Mg(2+). His15 contributes to the ATP binding site. A Mg(2+)-binding site is contributed by Asp17. Glu43 is a K(+) binding site. Glu56 and Gln99 together coordinate L-methionine. ATP is bound by residues 167–169, 235–238, Asp246, 252–253, Ala269, Lys273, and Lys277; these read DGK, SGRF, and RK. Asp246 lines the L-methionine pocket. Lys277 contributes to the L-methionine binding site.

Belongs to the AdoMet synthase family. In terms of assembly, homotetramer; dimer of dimers. It depends on Mn(2+) as a cofactor. Mg(2+) serves as cofactor. Co(2+) is required as a cofactor. Requires K(+) as cofactor.

It is found in the cytoplasm. It carries out the reaction L-methionine + ATP + H2O = S-adenosyl-L-methionine + phosphate + diphosphate. The protein operates within amino-acid biosynthesis; S-adenosyl-L-methionine biosynthesis; S-adenosyl-L-methionine from L-methionine: step 1/1. Increased activity in the presence of 25 percent acetonitrile, methanol or dimethylformamide. In terms of biological role, catalyzes the formation of S-adenosylmethionine from methionine and ATP. In Acacia koa (Koa tree), this protein is S-adenosylmethionine synthase.